Here is a 709-residue protein sequence, read N- to C-terminus: Septu protein PtuA (709 aa).

Functionally, component of antiviral defense system Septu type II, composed of PtuA and PtuB. Expression of Septu type II in B.subtilis (strain BEST7003) confers resistance to phages SBSphiC and SpBeta. May be an ATPase. This is Septu protein PtuA from Bacillus mycoides (strain KBAB4) (Bacillus weihenstephanensis).